Consider the following 180-residue polypeptide: ATP-dependent protease subunit HslV (180 aa).

Residue threonine 5 is part of the active site. Residues glycine 165, cysteine 168, and threonine 171 each contribute to the Na(+) site.

Belongs to the peptidase T1B family. HslV subfamily. In terms of assembly, a double ring-shaped homohexamer of HslV is capped on each side by a ring-shaped HslU homohexamer. The assembly of the HslU/HslV complex is dependent on binding of ATP.

It localises to the cytoplasm. It carries out the reaction ATP-dependent cleavage of peptide bonds with broad specificity.. Allosterically activated by HslU binding. Protease subunit of a proteasome-like degradation complex believed to be a general protein degrading machinery. The polypeptide is ATP-dependent protease subunit HslV (Helicobacter pylori (strain G27)).